The sequence spans 160 residues: Cytochrome b6-f complex subunit 4 (160 aa).

A run of 3 helical transmembrane segments spans residues leucine 36–isoleucine 56, leucine 95–glutamate 115, and threonine 131–isoleucine 151.

This sequence belongs to the cytochrome b family. PetD subfamily. The 4 large subunits of the cytochrome b6-f complex are cytochrome b6, subunit IV (17 kDa polypeptide, petD), cytochrome f and the Rieske protein, while the 4 small subunits are petG, petL, petM and petN. The complex functions as a dimer.

Its subcellular location is the plastid. It localises to the chloroplast thylakoid membrane. Functionally, component of the cytochrome b6-f complex, which mediates electron transfer between photosystem II (PSII) and photosystem I (PSI), cyclic electron flow around PSI, and state transitions. The chain is Cytochrome b6-f complex subunit 4 from Oenothera elata subsp. hookeri (Hooker's evening primrose).